Consider the following 611-residue polypeptide: Beta-hexosaminidase (611 aa).

This sequence belongs to the glycosyl hydrolase 20 family. In terms of assembly, homodimer.

Its subcellular location is the periplasm. It carries out the reaction Hydrolysis of terminal non-reducing N-acetyl-D-hexosamine residues in N-acetyl-beta-D-hexosaminides.. It participates in glycan degradation; chitin degradation. With respect to regulation, inhibited by mercuric ions, PNP-beta-Glc, PNP-beta-Gal, PNP-alpha-GlcNAc, and PNP-beta-S-GlcNAc. Its function is as follows. Hydrolyzes aryl-N-acetyl-beta-D-glucosaminide (aryl-beta-GlcNAc), aryl-beta-GalNAc and chitin oligosaccharides. Can hydrolyze rapidly the artificial substrates p-nitrophenyl-N-acetyl-beta-D-glucosaminide (PNP-beta-GlcNAc) and 4-methylumbelliferyl-beta-GlcNAc, and is slightly active on p-nitrophenyl-beta-GalNAc. This enzyme is not processive, i.e. when it hydrolyzes (GlcNAc)n, both products, (Glc-NAc)n-1 and the terminal GlcNAc, are released before the enzyme attacks a second molecule of (GlcNAc)n or (GlcNAc)n-1. The chain is Beta-hexosaminidase from Vibrio furnissii.